The following is a 679-amino-acid chain: MGIRGLMSFVEDHSNEFFTDLKLRDTKIVIDGYALFHRLCFSSNLDLRYGGDYDSFADVVQKFFESLFACNICPYVVLDGGCDISDKKLTTLKDRAREKIQMAHSLSVGGSGYVCPLLIREVFIQVLIKLRVCFVQCFSEADRDIMTLANHWNCPVLSSDSDFCIFDLKTGFCPLNSFQWRNMNTIKGTQNYIPAKCFSLDAFCHHFSNMNKALLPLFAVLCGNDHVNLPIMETFLSKARLPLGATSSKGRRHHRILGLLNWLSHFANPTEALDNVLKYLPKKDRENVKELLCCSMEEYQQSQVKLQDFFQCGTYVCPDALNLGLPEWVLVALAKGQLSPFISDALVLRRTILPTQVENMQQPNAHRISQPIRQIIYGLLLNASPHLDKTSWNALPPQPLAFSEVERINKNIRTSIIDAVELAKDHSDLSRLTELSLRRRQMLLLETLKVKQTILEPIPTSLKLPIAVSCYWLQHTETKAKLHHLQSLLLTMLVGPLIAIINSPGKEELQEDGAKMLYAEFQRVKAQTRLGTRLDLDTAHIFCQWQSCLQMGMYLNQLLSTPLPEPDLTRLYSGSLVHGLCQQLLASTSVESLLSICPEAKQLYEYLFNATRSYAPAEIFLPKGRSNSKKKRQKKQNTSCSKNRGRTTAHTKCWYEGNNRFGLLMVENLEEHSEASNIE.

Residues 351-400 (TILPTQVENMQQPNAHRISQPIRQIIYGLLLNASPHLDKTSWNALPPQPL) are interaction with SHLD2. Positions 625–645 (RSNSKKKRQKKQNTSCSKNRG) are disordered. Residues 626 to 635 (SNSKKKRQKK) are compositionally biased toward basic residues.

It belongs to the asteroid family. In terms of assembly, interacts with SHLD1, SHLD2, SHLD3, RIF1 and MAD2L2/REV7.

Functionally, structure-specific DNA endonuclease that specifically cleaves single-stranded DNA and 3' overhang DNA. Contributes to the control of DNA double-strand break repair choice by antagonizing BRCA1-dependent homologous recombination (HR) and promoting non-homologous end-joining (NHEJ). Recruited to the single-stranded DNA ends by SHLD2 and cleaves the 3' exposed DNA ends, therefore inhibiting DNA end resection (necessary for HR) and promoting DNA end protection (necessary for NHEJ). This is Single-strand DNA endonuclease ASTE1 (ASTE1) from Homo sapiens (Human).